The following is a 633-amino-acid chain: tRNA uridine 5-carboxymethylaminomethyl modification enzyme MnmG (633 aa).

Residues 15–20 (GAGHAG), Val127, and Ser182 contribute to the FAD site. An NAD(+)-binding site is contributed by 276 to 290 (GPRYCPSIEDKIVRF). Gln373 is a binding site for FAD.

The protein belongs to the MnmG family. In terms of assembly, homodimer. Heterotetramer of two MnmE and two MnmG subunits. FAD serves as cofactor.

The protein resides in the cytoplasm. Functionally, NAD-binding protein involved in the addition of a carboxymethylaminomethyl (cmnm) group at the wobble position (U34) of certain tRNAs, forming tRNA-cmnm(5)s(2)U34. In Streptococcus thermophilus (strain ATCC BAA-491 / LMD-9), this protein is tRNA uridine 5-carboxymethylaminomethyl modification enzyme MnmG.